A 495-amino-acid polypeptide reads, in one-letter code: Glutamate--tRNA ligase (495 aa).

The 'HIGH' region motif lies at 14–24; sequence PSPTGYLHIGS. The short motif at 255-259 is the 'KMSKS' region element; the sequence is KLSKR. Position 258 (lysine 258) interacts with ATP.

The protein belongs to the class-I aminoacyl-tRNA synthetase family. Glutamate--tRNA ligase type 1 subfamily. In terms of assembly, monomer.

Its subcellular location is the cytoplasm. The catalysed reaction is tRNA(Glu) + L-glutamate + ATP = L-glutamyl-tRNA(Glu) + AMP + diphosphate. In terms of biological role, catalyzes the attachment of glutamate to tRNA(Glu) in a two-step reaction: glutamate is first activated by ATP to form Glu-AMP and then transferred to the acceptor end of tRNA(Glu). The protein is Glutamate--tRNA ligase of Herpetosiphon aurantiacus (strain ATCC 23779 / DSM 785 / 114-95).